The primary structure comprises 570 residues: Periplasmic trehalase (570 aa).

The first 34 residues, Met1 to Ala34, serve as a signal peptide directing secretion. Substrate-binding positions include Arg159, Trp166–Asp167, Asn203, Arg212–Gln214, Arg284–Glu286, and Gly317. Catalysis depends on proton donor/acceptor residues Asp319 and Glu503. Glu518 lines the substrate pocket. A disordered region spans residues Lys544–Gln570. A compositionally biased stretch (low complexity) spans Pro554–Gln570.

It belongs to the glycosyl hydrolase 37 family. As to quaternary structure, monomer.

It localises to the periplasm. It catalyses the reaction alpha,alpha-trehalose + H2O = alpha-D-glucose + beta-D-glucose. In terms of biological role, provides the cells with the ability to utilize trehalose at high osmolarity by splitting it into glucose molecules that can subsequently be taken up by the phosphotransferase-mediated uptake system. This chain is Periplasmic trehalase, found in Salmonella choleraesuis (strain SC-B67).